The following is a 1270-amino-acid chain: Activating transcription factor 7-interacting protein 1 (1270 aa).

Met-1 carries the N-acetylmethionine modification. Lys-33 participates in a covalent cross-link: Glycyl lysine isopeptide (Lys-Gly) (interchain with G-Cter in SUMO2). A phosphoserine mark is found at Ser-57 and Ser-113. Disordered regions lie at residues 104-223 (DDDL…ISGD) and 235-402 (TSVD…EDET). Thr-118 is subject to Phosphothreonine. 2 stretches are compositionally biased toward low complexity: residues 132-203 (GDPA…SSGD) and 248-269 (DPAS…SDDL). Basic and acidic residues-rich tracts occupy residues 310 to 327 (SNKD…EKLE) and 333 to 343 (DSLDEKNKADN). The segment covering 347–356 (ANEETLETDD) has biased composition (acidic residues). Positions 363–373 (RPPENEKKVEE) are enriched in basic and acidic residues. 6 positions are modified to phosphoserine: Ser-445, Ser-473, Ser-474, Ser-477, Ser-479, and Ser-496. 4 disordered regions span residues 455-570 (TSLL…SKRR), 658-685 (EDLK…NSNN), 822-862 (PPTV…PTAS), and 886-906 (RTSL…NRGP). Residues 474 to 486 (SFGSPSKQESSES) show a composition bias toward polar residues. Positions 496–509 (SDEEDISGEKDESE) are enriched in acidic residues. Over residues 524–552 (SNEKDNKPEEEEQVIHEDDERPSEKNEFS) the composition is skewed to basic and acidic residues. Positions 553 to 571 (RRKRSKSEDMDNVQSKRRR) match the Nuclear localization signal motif. Residue Lys-558 forms a Glycyl lysine isopeptide (Lys-Gly) (interchain with G-Cter in SUMO2) linkage. Ser-559 is modified (phosphoserine). Positions 562 to 817 (MDNVQSKRRR…NQPSGNVEFI (256 aa)) are interaction with SETDB1. The stretch at 617 to 665 (KTLAELKTRVEKIECNKRHKTVLTELQAKIARLTKRFEAAKEDLKKRHE) forms a coiled coil. Ser-673 carries the phosphoserine modification. Residues 822-834 (PPTVSGLTKNPVS) show a composition bias toward polar residues. The segment covering 843–854 (KPNNVPSVPSPS) has biased composition (low complexity). Residue Ser-899 is modified to Phosphoserine. Residues Lys-910 and Lys-938 each participate in a glycyl lysine isopeptide (Lys-Gly) (interchain with G-Cter in SUMO2) cross-link. Composition is skewed to polar residues over residues 918–942 (TSSA…TIDA) and 950–964 (DSTS…SDSS). Disordered regions lie at residues 918–1026 (TSSA…SQTT) and 1115–1160 (STGP…STSL). Residues 965–975 (GVIDLTMDDEE) form an interaction with SUMO region. 2 stretches are compositionally biased toward polar residues: residues 988–999 (TPVSTMSSSQPV) and 1016–1026 (GVPTSGPSQTT). The segment covering 1134–1151 (PRPVHPAPLPEAPQPQRL) has biased composition (pro residues). The tract at residues 1154–1270 (EAASTSLPQK…TDVISSTQSS (117 aa)) is interaction with MBD1. The Fibronectin type-III domain maps to 1160–1270 (LPQKPHLKLA…TDVISSTQSS (111 aa)).

This sequence belongs to the MCAF family. As to quaternary structure, interacts with MBD1; the interaction is enhanced when MBD1 is sumoylated. Interacts with SETDB1; the interaction protects SETDB1 from proteasomal degradation and is required to stimulate histone methyltransferase activity and facilitate the conversion of dimethylated to trimethylated H3 'Lys-9'. Interacts with SUMO ubiquitin-like proteins (SUMO1, SUNO2 and SUMO3), with a preference for SUMO2 and SUMO3. Interacts with SP1, ATF7 and ZHX1. Interacts with the general transcription machinery, including ERCC2, ERCC3, GTF2E1, GTF2E2 and POLR2A. In terms of assembly, (Microbial infection) Interacts with Epstein-Barr virus BRLF1/Rta protein, leading to the regulation of host genes in Epstein-Barr virus-infected cells. Detected at low levels in breast, lung and stomach; highly up-regulated in the corresponding cancerous tissues (at protein level).

The protein localises to the nucleus. Functionally, recruiter that couples transcriptional factors to general transcription apparatus and thereby modulates transcription regulation and chromatin formation. Can both act as an activator or a repressor depending on the context. Required for HUSH-mediated heterochromatin formation and gene silencing. Mediates MBD1-dependent transcriptional repression, probably by recruiting complexes containing SETDB1. Stabilizes SETDB1, is required to stimulate histone methyltransferase activity of SETDB1 and facilitates the conversion of dimethylated to trimethylated H3 'Lys-9' (H3K9me3). The complex formed with MBD1 and SETDB1 represses transcription and couples DNA methylation and histone H3 'Lys-9' trimethylation (H3K9me3). Facilitates telomerase TERT and TERC gene expression by SP1 in cancer cells. This Homo sapiens (Human) protein is Activating transcription factor 7-interacting protein 1.